We begin with the raw amino-acid sequence, 113 residues long: Urocortin-2 (113 aa).

Positions 1-23 (MMTRWALVVFVVLMLDRILFVPG) are cleaved as a signal peptide. Positions 24–71 (TPIPTFQLLPQNSLETTPSSVTSESSSGTTTGPSASWSNSKASPYLDT) are excised as a propeptide. A compositionally biased stretch (low complexity) spans 37–61 (LETTPSSVTSESSSGTTTGPSASWS). Residues 37–64 (LETTPSSVTSESSSGTTTGPSASWSNSK) are disordered. The residue at position 110 (Val110) is a Valine amide; partial.

Belongs to the sauvagine/corticotropin-releasing factor/urotensin I family. In terms of assembly, binds with high affinity to CRF receptors 2-alpha and 2-beta. Glycosylated.

It localises to the secreted. Functionally, suppresses food intake, delays gastric emptying and decreases heat-induced edema. Might represent an endogenous ligand for maintaining homeostasis after stress. The protein is Urocortin-2 (Ucn2) of Mus musculus (Mouse).